A 771-amino-acid polypeptide reads, in one-letter code: Kinase suppressor of Ras A (771 aa).

Residues 152–169 (SRTSSGSTDEPSGQSTPA) are compositionally biased toward polar residues. The disordered stretch occupies residues 152–172 (SRTSSGSTDEPSGQSTPAIVT). The Phorbol-ester/DAG-type zinc finger occupies 215–269 (PHKWHRSTKFRFSGDAVCHFCQRPLGFGFLNAWEKCRSCKWKVHTQCKGRVGDSC). 2 disordered regions span residues 290 to 339 (GMWK…ISGN) and 414 to 433 (DSTGSQEVDSEAAPSQEAVD). A compositionally biased stretch (low complexity) spans 318-331 (SSSSTNSSAPSTPA). The region spanning 477 to 748 (DKQAPIIGRG…TDINLKLTAL (272 aa)) is the Protein kinase domain. Residues 483–491 (IGRGRFGKV) and lysine 503 contribute to the ATP site. Aspartate 600 (proton acceptor) is an active-site residue.

It belongs to the protein kinase superfamily. TKL Ser/Thr protein kinase family. In terms of assembly, interacts with mek-2. It depends on Mg(2+) as a cofactor.

The enzyme catalyses L-seryl-[protein] + ATP = O-phospho-L-seryl-[protein] + ADP + H(+). It catalyses the reaction L-threonyl-[protein] + ATP = O-phospho-L-threonyl-[protein] + ADP + H(+). Functionally, serine/threonine-protein kinase which positively regulates Ras-mediated signaling probably acting at the level of let-60/ras or/and lin-45/raf. Involved in sex myoblast migration. Plays a role in responses to M.nematophilum-mediated bacterial infection by promoting tail swelling and preventing constipation. Functions redundantly with ksr-2 in the Ras-mediated regulation of larval survival, the development of excretory canal and in mpk-1 phosphorylation in somatic cells. In addition, involved in determining vulval precursor cell fate during vulval induction independently of its kinase activity. Plays a role in egg-laying. The chain is Kinase suppressor of Ras A from Caenorhabditis elegans.